The chain runs to 643 residues: Maternal embryonic leucine zipper kinase (643 aa).

The Protein kinase domain occupies 11–263 (YELYETIGTG…MRNLLNHPWV (253 aa)). Residues 17-25 (IGTGGFAKV) and lysine 40 contribute to the ATP site. The residue at position 56 (threonine 56) is a Phosphothreonine; by autocatalysis. Aspartate 132 serves as the catalytic Proton acceptor. Phosphotyrosine; by autocatalysis is present on tyrosine 163. Threonine 167 bears the Phosphothreonine; by autocatalysis mark. Phosphoserine; by autocatalysis is present on residues serine 171 and serine 253. A UBA-like region spans residues 282-321 (LDEDCVTELSVHHRSSRQTMEDLISSWQYDHLTATYLLLL). Residues 326–643 (RGKPARLQLL…VEDILSGCKM (318 aa)) form an autoinhibitory region region. Phosphoserine; by autocatalysis is present on residues serine 336 and serine 343. Serine 352 carries the phosphoserine modification. Residues serine 399 and serine 423 each carry the phosphoserine; by autocatalysis modification. Phosphothreonine; by autocatalysis is present on threonine 486. Serine 490 carries the phosphoserine modification. Phosphoserine; by autocatalysis is present on serine 497. Threonine 510 carries the post-translational modification Phosphothreonine. Position 521 is a phosphoserine; by autocatalysis (serine 521). The residue at position 531 (threonine 531) is a Phosphothreonine; by autocatalysis. The region spanning 594 to 643 (SDFGKVTMQFELEVCQLQRPDVVGIRRQRLKGDAWVYKRLVEDILSGCKM) is the KA1 domain.

Belongs to the protein kinase superfamily. CAMK Ser/Thr protein kinase family. SNF1 subfamily. As to quaternary structure, monomer. Interacts with ZNF622 and PPP1R8. Autophosphorylated: autophosphorylation of the T-loop at Thr-167 and Ser-171 is required for activation. In terms of tissue distribution, expressed in testis, ovary, thymus, spleen and T-cell. Expressed by neural progenitors: highly enriched in cultures containing multipotent progenitors.

Its subcellular location is the cell membrane. The catalysed reaction is L-tyrosyl-[protein] + ATP = O-phospho-L-tyrosyl-[protein] + ADP + H(+). It carries out the reaction L-seryl-[protein] + ATP = O-phospho-L-seryl-[protein] + ADP + H(+). It catalyses the reaction L-threonyl-[protein] + ATP = O-phospho-L-threonyl-[protein] + ADP + H(+). Its activity is regulated as follows. Activated by autophosphorylation of the T-loop at Thr-167 and Ser-171: in contrast to other members of the SNF1 subfamily, phosphorylation at Thr-167 is not mediated by STK11/LKB1 but via autophosphorylation instead. Inhibited by calcium-binding. Kinase activity is also regulated by reducing agents: dithiothreitol (DTT) or reduced glutathione are required for kinase activity in vitro; such dependence is however not due to the presence of disulfide bonds. Its function is as follows. Serine/threonine-protein kinase involved in various processes such as cell cycle regulation, self-renewal of stem cells, apoptosis and splicing regulation. Has a broad substrate specificity; phosphorylates BCL2L14, CDC25B, MAP3K5/ASK1 and ZNF622. Acts as an activator of apoptosis by phosphorylating and activating MAP3K5/ASK1. Acts as a regulator of cell cycle, notably by mediating phosphorylation of CDC25B, promoting localization of CDC25B to the centrosome and the spindle poles during mitosis. Plays a key role in cell proliferation. Required for proliferation of embryonic and postnatal multipotent neural progenitors. Phosphorylates and inhibits BCL2L14. Also involved in the inhibition of spliceosome assembly during mitosis by phosphorylating ZNF622, thereby contributing to its redirection to the nucleus. May also play a role in primitive hematopoiesis. The sequence is that of Maternal embryonic leucine zipper kinase (Melk) from Mus musculus (Mouse).